The chain runs to 207 residues: Uracil phosphoribosyltransferase (207 aa).

Residues arginine 77, arginine 102, and 129–137 contribute to the 5-phospho-alpha-D-ribose 1-diphosphate site; that span reads DPMLATGGS. Uracil contacts are provided by residues isoleucine 192 and 197-199; that span reads GDA. 5-phospho-alpha-D-ribose 1-diphosphate is bound at residue aspartate 198.

It belongs to the UPRTase family. It depends on Mg(2+) as a cofactor.

It catalyses the reaction UMP + diphosphate = 5-phospho-alpha-D-ribose 1-diphosphate + uracil. It participates in pyrimidine metabolism; UMP biosynthesis via salvage pathway; UMP from uracil: step 1/1. Allosterically activated by GTP. Functionally, catalyzes the conversion of uracil and 5-phospho-alpha-D-ribose 1-diphosphate (PRPP) to UMP and diphosphate. The chain is Uracil phosphoribosyltransferase from Mesoplasma florum (strain ATCC 33453 / NBRC 100688 / NCTC 11704 / L1) (Acholeplasma florum).